Reading from the N-terminus, the 173-residue chain is Protein tyrosine phosphatase type IVA 1 (173 aa).

The 154-residue stretch at 8–161 (APVEVTYKNM…YRPKMRLRFK (154 aa)) folds into the Tyrosine-protein phosphatase domain. Cys49 and Cys104 are joined by a disulfide. Asp72 functions as the Proton donor in the catalytic mechanism. The segment at 97-132 (GCCIAVHCVAGLGRAPVLVALALIEGGMKYEDAVQF) is interaction with ATF5. The Phosphocysteine intermediate role is filled by Cys104. 105–110 (VAGLGR) serves as a coordination point for phosphate. Arg110 contacts substrate. Cysteine methyl ester is present on Cys170. A lipid anchor (S-farnesyl cysteine) is attached at Cys170. The propeptide at 171 to 173 (CIQ) is removed in mature form.

This sequence belongs to the protein-tyrosine phosphatase family. As to quaternary structure, homotrimer. Interacts with ATF5. Interacts with tubulin. In terms of processing, farnesylated. Farnesylation is required for membrane targeting. Unfarnesylated forms are shifted into the nucleus. In terms of tissue distribution, expressed in bone marrow, lymph nodes, T lymphocytes, spleen, thymus and tonsil. Overexpressed in tumor cell lines.

Its subcellular location is the cell membrane. The protein resides in the early endosome. It is found in the endoplasmic reticulum. The protein localises to the cytoplasm. It localises to the cytoskeleton. Its subcellular location is the spindle. The protein resides in the nucleus. The catalysed reaction is O-phospho-L-tyrosyl-[protein] + H2O = L-tyrosyl-[protein] + phosphate. Its activity is regulated as follows. Inhibited by sodium orthovanadate and pentamidine. In terms of biological role, protein tyrosine phosphatase which stimulates progression from G1 into S phase during mitosis. May play a role in the development and maintenance of differentiating epithelial tissues. Enhances cell proliferation, cell motility and invasive activity, and promotes cancer metastasis. The chain is Protein tyrosine phosphatase type IVA 1 (PTP4A1) from Homo sapiens (Human).